The sequence spans 296 residues: Ribonuclease H2 subunit A (296 aa).

Residues 14–236 (PCLMGIDEAG…CTTHLKGEVE (223 aa)) form the RNase H type-2 domain. Asp20, Glu21, and Asp127 together coordinate a divalent metal cation.

This sequence belongs to the RNase HII family. Eukaryotic subfamily. Requires Mn(2+) as cofactor. Mg(2+) serves as cofactor.

It catalyses the reaction Endonucleolytic cleavage to 5'-phosphomonoester.. Functionally, catalytic subunit of RNase HII, an endonuclease that specifically degrades the RNA of RNA:DNA hybrids. Participates in DNA replication, possibly by mediating the removal of lagging-strand Okazaki fragment RNA primers during DNA replication. Mediates the excision of single ribonucleotides from DNA:RNA duplexes. The protein is Ribonuclease H2 subunit A of Arabidopsis thaliana (Mouse-ear cress).